The sequence spans 82 residues: Small ribosomal subunit protein uS17 (82 aa).

It belongs to the universal ribosomal protein uS17 family. In terms of assembly, part of the 30S ribosomal subunit.

Its function is as follows. One of the primary rRNA binding proteins, it binds specifically to the 5'-end of 16S ribosomal RNA. This chain is Small ribosomal subunit protein uS17, found in Shewanella amazonensis (strain ATCC BAA-1098 / SB2B).